The following is a 400-amino-acid chain: Tryptophan synthase beta chain (400 aa).

N6-(pyridoxal phosphate)lysine is present on lysine 92.

This sequence belongs to the TrpB family. As to quaternary structure, tetramer of two alpha and two beta chains. The cofactor is pyridoxal 5'-phosphate.

It carries out the reaction (1S,2R)-1-C-(indol-3-yl)glycerol 3-phosphate + L-serine = D-glyceraldehyde 3-phosphate + L-tryptophan + H2O. It participates in amino-acid biosynthesis; L-tryptophan biosynthesis; L-tryptophan from chorismate: step 5/5. Functionally, the beta subunit is responsible for the synthesis of L-tryptophan from indole and L-serine. The polypeptide is Tryptophan synthase beta chain (Chromobacterium violaceum (strain ATCC 12472 / DSM 30191 / JCM 1249 / CCUG 213 / NBRC 12614 / NCIMB 9131 / NCTC 9757 / MK)).